The primary structure comprises 392 residues: Phosphoglycerate kinase (392 aa).

Residues 21–23, Arg36, 59–62, Arg113, and Arg146 contribute to the substrate site; these read DFN and HLGR. ATP is bound by residues Lys197, Glu319, and 345–348; that span reads GGDT.

This sequence belongs to the phosphoglycerate kinase family. As to quaternary structure, monomer.

It localises to the cytoplasm. The catalysed reaction is (2R)-3-phosphoglycerate + ATP = (2R)-3-phospho-glyceroyl phosphate + ADP. It functions in the pathway carbohydrate degradation; glycolysis; pyruvate from D-glyceraldehyde 3-phosphate: step 2/5. The chain is Phosphoglycerate kinase from Francisella tularensis subsp. novicida (strain U112).